Reading from the N-terminus, the 622-residue chain is 1-deoxy-D-xylulose-5-phosphate synthase (622 aa).

Residues histidine 71 and 112 to 114 (GHS) contribute to the thiamine diphosphate site. Position 143 (aspartate 143) interacts with Mg(2+). Thiamine diphosphate contacts are provided by residues 144 to 145 (GA), asparagine 172, tyrosine 283, and glutamate 363. Residue asparagine 172 participates in Mg(2+) binding.

The protein belongs to the transketolase family. DXPS subfamily. In terms of assembly, homodimer. It depends on Mg(2+) as a cofactor. Thiamine diphosphate serves as cofactor.

It catalyses the reaction D-glyceraldehyde 3-phosphate + pyruvate + H(+) = 1-deoxy-D-xylulose 5-phosphate + CO2. It participates in metabolic intermediate biosynthesis; 1-deoxy-D-xylulose 5-phosphate biosynthesis; 1-deoxy-D-xylulose 5-phosphate from D-glyceraldehyde 3-phosphate and pyruvate: step 1/1. Its function is as follows. Catalyzes the acyloin condensation reaction between C atoms 2 and 3 of pyruvate and glyceraldehyde 3-phosphate to yield 1-deoxy-D-xylulose-5-phosphate (DXP). This is 1-deoxy-D-xylulose-5-phosphate synthase from Caldanaerobacter subterraneus subsp. tengcongensis (strain DSM 15242 / JCM 11007 / NBRC 100824 / MB4) (Thermoanaerobacter tengcongensis).